A 299-amino-acid chain; its full sequence is Bifunctional protein FolD (299 aa).

Residues 169-171 (GRS), S194, and I235 contribute to the NADP(+) site.

Belongs to the tetrahydrofolate dehydrogenase/cyclohydrolase family. In terms of assembly, homodimer.

The enzyme catalyses (6R)-5,10-methylene-5,6,7,8-tetrahydrofolate + NADP(+) = (6R)-5,10-methenyltetrahydrofolate + NADPH. It catalyses the reaction (6R)-5,10-methenyltetrahydrofolate + H2O = (6R)-10-formyltetrahydrofolate + H(+). It participates in one-carbon metabolism; tetrahydrofolate interconversion. Its function is as follows. Catalyzes the oxidation of 5,10-methylenetetrahydrofolate to 5,10-methenyltetrahydrofolate and then the hydrolysis of 5,10-methenyltetrahydrofolate to 10-formyltetrahydrofolate. The protein is Bifunctional protein FolD of Trichormus variabilis (strain ATCC 29413 / PCC 7937) (Anabaena variabilis).